The sequence spans 417 residues: D-amino acid dehydrogenase (417 aa).

3–17 contributes to the FAD binding site; that stretch reads AVVLGSGVVGLMSAW.

This sequence belongs to the DadA oxidoreductase family. It depends on FAD as a cofactor.

The enzyme catalyses a D-alpha-amino acid + A + H2O = a 2-oxocarboxylate + AH2 + NH4(+). Its function is as follows. Oxidative deamination of D-amino acids. This chain is D-amino acid dehydrogenase, found in Vibrio vulnificus (strain CMCP6).